Reading from the N-terminus, the 293-residue chain is 4-hydroxy-tetrahydrodipicolinate synthase (293 aa).

T44 serves as a coordination point for pyruvate. The active-site Proton donor/acceptor is Y132. The active-site Schiff-base intermediate with substrate is K162. Pyruvate is bound at residue I204.

This sequence belongs to the DapA family. Homotetramer; dimer of dimers.

The protein localises to the cytoplasm. It carries out the reaction L-aspartate 4-semialdehyde + pyruvate = (2S,4S)-4-hydroxy-2,3,4,5-tetrahydrodipicolinate + H2O + H(+). It participates in amino-acid biosynthesis; L-lysine biosynthesis via DAP pathway; (S)-tetrahydrodipicolinate from L-aspartate: step 3/4. Its function is as follows. Catalyzes the condensation of (S)-aspartate-beta-semialdehyde [(S)-ASA] and pyruvate to 4-hydroxy-tetrahydrodipicolinate (HTPA). The polypeptide is 4-hydroxy-tetrahydrodipicolinate synthase (Erythrobacter litoralis (strain HTCC2594)).